Here is a 58-residue protein sequence, read N- to C-terminus: Amyloid-beta precursor protein (58 aa).

Residues 1–34 (ISEVKMDAEFRHDSGYEVHHQKLVFFAEDVGSNK) lie on the Extracellular side of the membrane. The Cu(2+) site is built by histidine 12, tyrosine 16, histidine 19, and histidine 20. The Zn(2+) site is built by histidine 12, tyrosine 16, histidine 19, and histidine 20. The helical transmembrane segment at 35-58 (GAIIGLMVGGVVIATVIVITLVML) threads the bilayer.

It belongs to the APP family. Binds, via its C-terminus, to the PID domain of several cytoplasmic proteins, including APBB family members, the APBA family, MAPK8IP1, SHC1 and NUMB and DAB1. Binding to DAB1 inhibits its serine phosphorylation. Interacts (via NPXY motif) with DAB2 (via PID domain); the interaction is impaired by tyrosine phosphorylation of the NPXY motif. Also interacts with GPCR-like protein BPP, APPBP1, IB1, KNS2 (via its TPR domains), APPBP2 (via BaSS) and DDB1. In vitro, it binds MAPT via the MT-binding domains. Associates with microtubules in the presence of ATP and in a kinesin-dependent manner. Interacts, through a C-terminal domain, with GNAO1. Interacts with CPEB1, ANKS1B and AGER. Interacts with ITM2B. Interacts with ITM2C. Interacts with IDE. Can form homodimers; dimerization is enhanced in the presence of Cu(2+) ions. Can form homodimers; this is promoted by heparin binding. Interacts with SORL1 (via N-terminal ectodomain); this interaction retains APP in the trans-Golgi network and reduces processing into soluble APP-alpha and amyloid-beta peptides. Interacts with PLD3. Interacts with VDAC1. Interacts with NSG1; could regulate APP processing. Amyloid-beta protein 42 interacts with FPR2. Interacts with LRRK2. Interacts (via cytoplasmic domain) with KIF5B. Interacts (via C-terminus) with APBB2/FE65L1 (via C-terminus). Interacts (via intracellular domain) with APBB3. Post-translationally, proteolytically processed under normal cellular conditions. Cleavage either by alpha-secretase, beta-secretase or theta-secretase leads to generation and extracellular release of soluble APP peptides, S-APP-alpha and S-APP-beta, and the retention of corresponding membrane-anchored C-terminal fragments, C80, C83 and C99. Subsequent processing of C80 and C83 by gamma-secretase yields P3 peptides. This is the major secretory pathway and is non-amyloidogenic. Alternatively, presenilin/nicastrin-mediated gamma-secretase processing of C99 releases the amyloid-beta proteins, amyloid-beta protein 40 and amyloid-beta protein 42, major components of amyloid plaques, and the cytotoxic C-terminal fragments, gamma-CTF(50), gamma-CTF(57) and gamma-CTF(59). PSEN1 cleavage is more efficient with C83 than with C99 as substrate (in vitro). Amyloid-beta protein 40 and Amyloid-beta protein 42 are cleaved by ACE. Many other minor amyloid-beta peptides, amyloid-beta 1-X peptides, are found in cerebral spinal fluid (CSF) including the amyloid-beta X-15 peptides, produced from the cleavage by alpha-secretase.

The protein resides in the cell membrane. It localises to the membrane. Its subcellular location is the perikaryon. It is found in the cell projection. The protein localises to the growth cone. The protein resides in the clathrin-coated pit. It localises to the early endosome. Its subcellular location is the cytoplasmic vesicle. It is found in the secreted. The protein localises to the cell surface. The protein resides in the nucleus. It localises to the cytoplasm. In terms of biological role, functions as a cell surface receptor and performs physiological functions on the surface of neurons relevant to neurite growth, neuronal adhesion and axonogenesis. Interaction between APP molecules on neighboring cells promotes synaptogenesis. Involved in cell mobility and transcription regulation through protein-protein interactions. Can promote transcription activation through binding to APBB1-KAT5 and inhibit Notch signaling through interaction with Numb. Couples to apoptosis-inducing pathways such as those mediated by G(o) and JIP. Inhibits G(o)-alpha ATPase activity. Acts as a kinesin I membrane receptor, mediating the axonal transport of beta-secretase and presenilin 1. By acting as a kinesin I membrane receptor, plays a role in axonal anterograde transport of cargo towards synapses in axons. May be involved in copper homeostasis/oxidative stress through copper ion reduction. In vitro, copper-metallated APP induces neuronal death directly or is potentiated through Cu(2+)-mediated low-density lipoprotein oxidation. Can regulate neurite outgrowth through binding to components of the extracellular matrix such as heparin and collagen I and IV. Induces a AGER-dependent pathway that involves activation of p38 MAPK, resulting in internalization of amyloid-beta peptide and mitochondrial dysfunction in cultured cortical neurons. Provides Cu(2+) ions for GPC1 which are required for release of nitric oxide (NO) and subsequent degradation of the heparan sulfate chains on GPC1. The polypeptide is Amyloid-beta precursor protein (APP) (Canis lupus familiaris (Dog)).